A 218-amino-acid chain; its full sequence is Protein N-lysine methyltransferase METTL21A (218 aa).

Residues tryptophan 47, glycine 73 to glycine 75, aspartate 94, tryptophan 125, and alanine 143 each bind S-adenosyl-L-methionine.

The protein belongs to the methyltransferase superfamily. METTL21 family.

The protein resides in the cytoplasm. It carries out the reaction L-lysyl-[protein] + 3 S-adenosyl-L-methionine = N(6),N(6),N(6)-trimethyl-L-lysyl-[protein] + 3 S-adenosyl-L-homocysteine + 3 H(+). Functionally, protein-lysine methyltransferase that selectively trimethylates residues in heat shock protein 70 (HSP70) family members. This Danio rerio (Zebrafish) protein is Protein N-lysine methyltransferase METTL21A (mettl21a).